We begin with the raw amino-acid sequence, 66 residues long: Large ribosomal subunit protein bL33c (66 aa).

Belongs to the bacterial ribosomal protein bL33 family.

The protein resides in the plastid. It is found in the chloroplast. The chain is Large ribosomal subunit protein bL33c from Morus indica (Mulberry).